Consider the following 127-residue polypeptide: MSDNEDNFDGDDFDDVEEDEGLDDLENAEEEGQENVEILPSGERPQANQKRITTPYMTKYERARVLGTRALQIAMCAPVMVELEGETDPLLIAMKELKARKIPIIIRRYLPDGSYEDWGVDELIISD.

Acidic residues predominate over residues 1–34; it reads MSDNEDNFDGDDFDDVEEDEGLDDLENAEEEGQE. The disordered stretch occupies residues 1-53; it reads MSDNEDNFDGDDFDDVEEDEGLDDLENAEEEGQENVEILPSGERPQANQKRIT. N-acetylserine is present on serine 2. Residue serine 2 is modified to Phosphoserine; by CK2.

This sequence belongs to the archaeal Rpo6/eukaryotic RPB6 RNA polymerase subunit family. In terms of assembly, component of the RNA polymerase I (Pol I), RNA polymerase II (Pol II) and RNA polymerase III (Pol III) complexes consisting of at least 13, 12 and 17 subunits, respectively. Pol I complex consists of a ten-subunit catalytic core composed of POLR1A/RPA1, POLR1B/RPA2, POLR1C/RPAC1, POLR1D/RPAC2, POLR1H/RPA12, POLR2E/RPABC1, POLR2F/RPABC2, POLR2H/RPABC3, POLR2K/RPABC4 and POLR2L/RPABC5; a mobile stalk subunit POLR1F/RPA43 protruding from the core and additional subunits homologous to general transcription factors POLR1E/RPA49 and POLR1G/RPA34. Part of Pol I pre-initiation complex (PIC), in which Pol I core assembles with RRN3 and promoter-bound UTBF and SL1/TIF-IB complex. Pol II complex contains a ten-subunit catalytic core composed of POLR2A/RPB1, POLR2B/RPB2, POLR2C/RPB3, POLR2I/RPB9, POLR2J/RPB11, POLR2E/RPABC1, POLR2F/RPABC2, POLR2H/RPABC3, POLR2K/RPABC4 and POLR2L/RPABC5 and a mobile stalk composed of two subunits POLR2D/RPB4 and POLR2G/RPB7. Part of Pol II(G) complex, in which Pol II core associates with an additional subunit POLR2M; unlike conventional Pol II, Pol II(G) functions as a transcriptional repressor. Part of TBP-based Pol II pre-initiation complex (PIC), in which Pol II core assembles with general transcription factors and other specific initiation factors including GTF2E1, GTF2E2, GTF2F1, GTF2F2, TCEA1, ERCC2, ERCC3, GTF2H2, GTF2H3, GTF2H4, GTF2H5, GTF2A1, GTF2A2, GTF2B and TBP; this large multi-subunit PIC complex mediates DNA unwinding and targets Pol II core to the transcription start site where the first phosphodiester bond forms. Pol III complex consists of a ten-subunit catalytic core composed of POLR3A/RPC1, POLR3B/RPC2, POLR1C/RPAC1, POLR1D/RPAC2, POLR3K/RPC10, POLR2E/RPABC1, POLR2F/RPABC2, POLR2H/RPABC3, POLR2K/RPABC4 and POLR2L/RPABC5; a mobile stalk composed of two subunits POLR3H/RPC8 and CRCP/RPC9, protruding from the core and functioning primarily in transcription initiation; and additional subunits homologous to general transcription factors of the RNA polymerase II machinery, POLR3C/RPC3-POLR3F/RPC6-POLR3G/RPC7 heterotrimer required for transcription initiation and POLR3D/RPC4-POLR3E/RPC5 heterodimer involved in both transcription initiation and termination.

The protein localises to the nucleus. It localises to the nucleolus. DNA-dependent RNA polymerase catalyzes the transcription of DNA into RNA using the four ribonucleoside triphosphates as substrates. Common component of RNA polymerases I, II, and III which synthesize ribosomal RNA precursors, mRNA precursors and many functional non-coding RNAs, and small RNAs, such as 5S rRNA and tRNAs, respectively. Pol II is the central component of the basal RNA polymerase II transcription machinery. Pols are composed of mobile elements that move relative to each other. In Pol II, POLR2F/RPABC2 is part of the clamp element and together with parts of POLR2A/RPB1 and POLR2B/RPB2 forms a pocket to which the POLR2D/RPB4-POLR2G/RPB7 subcomplex binds. In Mus musculus (Mouse), this protein is DNA-directed RNA polymerases I, II, and III subunit RPABC2.